The following is a 244-amino-acid chain: Cobalt transport protein CbiM (244 aa).

A signal peptide spans 1 to 28; sequence MKLLKNKKVTFVALLAILAVLSTQSVSA. 6 helical membrane-spanning segments follow: residues 36 to 56, 71 to 91, 108 to 128, 135 to 155, 166 to 186, and 208 to 228; these read LPLF…VVGL, TMLA…IPSV, FGPS…ALLL, TLGA…YFVY, PVSI…TTSI, and GVFL…TVVL.

It belongs to the CbiM family. As to quaternary structure, forms an energy-coupling factor (ECF) transporter complex composed of an ATP-binding protein (A component, CbiO), a transmembrane protein (T component, CbiQ) and 2 possible substrate-capture proteins (S components, CbiM and CbiN) of unknown stoichimetry.

The protein resides in the cell membrane. It participates in cofactor biosynthesis; adenosylcobalamin biosynthesis. Part of the energy-coupling factor (ECF) transporter complex CbiMNOQ involved in cobalt import. In Streptococcus sanguinis (strain SK36), this protein is Cobalt transport protein CbiM.